A 300-amino-acid chain; its full sequence is MTPKQSPNSETGAVTEPPLVLVTGPSGAGRTTAINVLEDLDFEAIDNLPLRLVPALVAAGGADRALVLGLDPRNRDFSTEAMVDMIDMLKARRGLKTTVLYLDADAEILLRRFSETRRRHPLSPAESPELGVSRELDLMQPVKERSDVVIDTSDLNVHQLRAEVERLFAPSGRRLAVSLHSFSYKRGIPRNVDMVFDCRFLSNPYWEPALRVHDGRDQEVQDYVMSDARFQGFFDRVLDLTLSLLPAYREEGKSHFSIAFGCTGGQHRSVTLAETLAKALAREGQQVSIRHRELPGQQLK.

24 to 31 (GPSGAGRT) provides a ligand contact to ATP. GTP is bound at residue 71-74 (DPRN).

The protein belongs to the RapZ-like family.

Functionally, displays ATPase and GTPase activities. This is Nucleotide-binding protein TM1040_2438 from Ruegeria sp. (strain TM1040) (Silicibacter sp.).